We begin with the raw amino-acid sequence, 645 residues long: Iron-regulated surface determinant protein B (645 aa).

An N-terminal signal peptide occupies residues 1-40; it reads MNKQQKEFKSFYSIRKSSLGVASVAISTLLLLMSNGEAQA. The YSIRK-G/S signaling motif motif lies at 12–23; it reads YSIRKSSLGVAS. Over residues 38–53 the composition is skewed to low complexity; that stretch reads AQAAAEETGGTNTEAQ. The segment at 38 to 113 is disordered; the sequence is AQAAAEETGG…APKETKAVKP (76 aa). A compositionally biased stretch (basic and acidic residues) spans 84–110; that stretch reads KEVEAPTSETKEAKEVKEVKAPKETKA. NEAT domains are found at residues 144–269 and 341–458; these read SAPN…KFKT and KMTD…TKAN. Methionine 362 and tyrosine 440 together coordinate heme. 2 stretches are compositionally biased toward basic and acidic residues: residues 458–476 and 489–534; these read NTDK…KKEA and VEKE…KGEV. The disordered stretch occupies residues 458–619; sequence NTDKSNKKEQ…LPQTGEESNK (162 aa). Low complexity predominate over residues 535–560; that stretch reads ESSSTTPTKVVSTTQNVAKPTTASSK. Residues 585 to 615 are compositionally biased toward polar residues; it reads NIKNTNDGHTQSQNNKNTQENKAKSLPQTGE. Positions 610–614 match the LPXTG sorting signal motif; the sequence is LPQTG. Threonine 613 carries the pentaglycyl murein peptidoglycan amidated threonine modification. The propeptide at 614-645 is removed by sortase; sequence GEESNKDMTLPLMALLALSSIVAFVLPRKRKN.

The protein belongs to the IsdB family. Interacts with host HBA; this interaction allows heme extraction as iron source. Interacts with IsdA.

Its subcellular location is the secreted. It localises to the cell wall. Functionally, cell wall-anchored surface receptor that extracts heme from oxidized metHb to enable growth on hemoglobin as a sole iron source. Rapidly extracts heme from hemoglobin and transfers it to IsdA or IsdC, which then relays it to the membrane transporter/IsdEF for internalization. Also promotes resistance to hydrogen peroxide and killing by neutrophils. This is Iron-regulated surface determinant protein B (isdB) from Staphylococcus aureus (strain Mu3 / ATCC 700698).